Here is a 525-residue protein sequence, read N- to C-terminus: GMP synthase [glutamine-hydrolyzing] (525 aa).

The Glutamine amidotransferase type-1 domain maps to 9-207 (RILILDFGSQ…VRDICQCEAL (199 aa)). The Nucleophile role is filled by Cys86. Catalysis depends on residues His181 and Glu183. Positions 208-400 (WTPAKIIDDA…LGLPYDMLYR (193 aa)) constitute a GMPS ATP-PPase domain. 235-241 (SGGVDSS) serves as a coordination point for ATP.

In terms of assembly, homodimer.

The catalysed reaction is XMP + L-glutamine + ATP + H2O = GMP + L-glutamate + AMP + diphosphate + 2 H(+). Its pathway is purine metabolism; GMP biosynthesis; GMP from XMP (L-Gln route): step 1/1. Catalyzes the synthesis of GMP from XMP. The chain is GMP synthase [glutamine-hydrolyzing] from Klebsiella pneumoniae subsp. pneumoniae (strain ATCC 700721 / MGH 78578).